An 89-amino-acid chain; its full sequence is Small ribosomal subunit protein uS17 (89 aa).

This sequence belongs to the universal ribosomal protein uS17 family. Part of the 30S ribosomal subunit.

Functionally, one of the primary rRNA binding proteins, it binds specifically to the 5'-end of 16S ribosomal RNA. This chain is Small ribosomal subunit protein uS17, found in Phytoplasma mali (strain AT).